A 238-amino-acid polypeptide reads, in one-letter code: 2-phytyl-1,4-naphtoquinone methyltransferase (238 aa).

Belongs to the class I-like SAM-binding methyltransferase superfamily. MenG/UbiE family.

It catalyses the reaction demethylphylloquinol + S-adenosyl-L-methionine = phylloquinol + S-adenosyl-L-homocysteine + H(+). It participates in cofactor biosynthesis; phylloquinone biosynthesis. Functionally, methyltransferase required for the conversion of 2-phytyl-1,4-beta-naphthoquinol to phylloquinol. The protein is 2-phytyl-1,4-naphtoquinone methyltransferase of Synechocystis sp. (strain ATCC 27184 / PCC 6803 / Kazusa).